We begin with the raw amino-acid sequence, 116 residues long: Photosystem II assembly factor Psb28 protein (116 aa).

Belongs to the Psb28 family. Part of a photosystem II (PSII) assembly intermediate complex PSII-I; crystallized from a strain deleted of psbJ, it forms monomeric PSII before addition of the oxygen evolving complex. PSII-I includes 3 assembly factors not found in mature PSII (Psb27, Psb28 and Psb34). This protein binds to the cytoplasmic face of D1 and D2 (psbA and psbD), contacting CP47 (psbB) directly above the quinone b-binding site.

The protein resides in the cellular thylakoid membrane. Its function is as follows. A photosystem II (PSII) assembly factor that binds PSII during biogenesis, protecting the complex until water splitting is activated. This chain is Photosystem II assembly factor Psb28 protein, found in Thermosynechococcus vestitus (strain NIES-2133 / IAM M-273 / BP-1).